We begin with the raw amino-acid sequence, 1182 residues long: Myosin IC heavy chain (1182 aa).

Residues 15–698 enclose the Myosin motor domain; it reads EGLDDMTLLS…MLFSLEETRE (684 aa). 109 to 116 provides a ligand contact to ATP; the sequence is GESGAGKT. Positions 571-593 are actin-binding; the sequence is AAELVATLMKSTPHYIRTIKPND. Positions 774 to 957 constitute a TH1 domain; the sequence is RNRFSMISVR…QFHIASGLPA (184 aa). Disordered regions lie at residues 999-1052 and 1064-1103; these read KPAP…PAPG and SKPLPSPTGAPMMKKPAPTAPGGPAPAGAPTPMMKKPAGQ. Positions 1013-1042 are enriched in low complexity; sequence KKPAPTAPGGAPMMKKPAPAPGGAPMMKKP. Residues 1081-1092 show a composition bias toward pro residues; the sequence is PTAPGGPAPAGA. The region spanning 1123 to 1182 is the SH3 domain; the sequence is PPPQQYIALYEYDAMQPDELTFKENDVINLIKKVDADWWQGELVRTKQIGMLPSNYVQQI.

This sequence belongs to the TRAFAC class myosin-kinesin ATPase superfamily. Myosin family. As to quaternary structure, myosin I heavy chain is single-headed. Dimer of a heavy and a light chain. Inability to self-assemble into filaments.

Its subcellular location is the cell projection. It is found in the lamellipodium. Its function is as follows. Myosin is a protein that binds to actin and has ATPase activity that is activated by actin. Involved in the process of phagocytosis and appears to support streaming behavior. In Dictyostelium discoideum (Social amoeba), this protein is Myosin IC heavy chain (myoC).